A 189-amino-acid chain; its full sequence is Phosphoheptose isomerase (189 aa).

Residues 34–189 form the SIS domain; that stretch reads LVEAFRKGNK…CDLVEKALFA (156 aa). 49–51 contributes to the substrate binding site; it reads NGG. Zn(2+) is bound by residues His-58 and Glu-62. Residues Glu-62, 91–92, 117–119, Ser-122, and Gln-169 each bind substrate; these read ND and STS. Residues Gln-169 and His-177 each coordinate Zn(2+).

It belongs to the SIS family. GmhA subfamily. In terms of assembly, homotetramer. Requires Zn(2+) as cofactor.

It localises to the cytoplasm. The catalysed reaction is 2 D-sedoheptulose 7-phosphate = D-glycero-alpha-D-manno-heptose 7-phosphate + D-glycero-beta-D-manno-heptose 7-phosphate. The protein operates within carbohydrate biosynthesis; D-glycero-D-manno-heptose 7-phosphate biosynthesis; D-glycero-alpha-D-manno-heptose 7-phosphate and D-glycero-beta-D-manno-heptose 7-phosphate from sedoheptulose 7-phosphate: step 1/1. In terms of biological role, catalyzes the isomerization of sedoheptulose 7-phosphate in D-glycero-D-manno-heptose 7-phosphate. The sequence is that of Phosphoheptose isomerase from Pelobacter propionicus (strain DSM 2379 / NBRC 103807 / OttBd1).